Reading from the N-terminus, the 711-residue chain is Putative DNA topoisomerase 3 (711 aa).

The region spanning 2 to 135 is the Toprim domain; it reads KYLILAEKPS…LRRLWISSVT (134 aa). Positions 8 and 104 each coordinate Mg(2+). Residues 152–580 enclose the Topo IA-type catalytic domain; that stretch reads YNDLYYAALA…EMKGFTKDVV (429 aa). Residues 186–191 are interaction with DNA; that stretch reads SLGRVQ. Residue Tyr-305 is the O-(5'-phospho-DNA)-tyrosine intermediate of the active site. A disordered region spans residues 691–711; sequence MNKNEGLDNNPFKDALKNLNL.

The protein belongs to the type IA topoisomerase family. It depends on Mg(2+) as a cofactor.

It catalyses the reaction ATP-independent breakage of single-stranded DNA, followed by passage and rejoining.. Releases the supercoiling and torsional tension of DNA, which is introduced during the DNA replication and transcription, by transiently cleaving and rejoining one strand of the DNA duplex. Introduces a single-strand break via transesterification at a target site in duplex DNA. The scissile phosphodiester is attacked by the catalytic tyrosine of the enzyme, resulting in the formation of a DNA-(5'-phosphotyrosyl)-enzyme intermediate and the expulsion of a 3'-OH DNA strand. The free DNA strand then undergoes passage around the unbroken strand, thus removing DNA supercoils. Finally, in the religation step, the DNA 3'-OH attacks the covalent intermediate to expel the active-site tyrosine and restore the DNA phosphodiester backbone. The chain is Putative DNA topoisomerase 3 from Staphylococcus aureus (strain bovine RF122 / ET3-1).